Consider the following 140-residue polypeptide: Large ribosomal subunit protein uL15 (140 aa).

The interval 1–32 is disordered; that stretch reads MDTKKFRGSRTCGGGTHKNRRGAGNRGGRGKA.

Belongs to the universal ribosomal protein uL15 family. As to quaternary structure, part of the 50S ribosomal subunit.

Functionally, binds to the 23S rRNA. The polypeptide is Large ribosomal subunit protein uL15 (Methanosarcina acetivorans (strain ATCC 35395 / DSM 2834 / JCM 12185 / C2A)).